Here is a 323-residue protein sequence, read N- to C-terminus: Serine acetyltransferase 2 (323 aa).

The tract at residues 302–323 (AQSNGPSLSAGDTEKGHTNSTS) is disordered. The segment covering 313–323 (DTEKGHTNSTS) has biased composition (basic and acidic residues).

Belongs to the transferase hexapeptide repeat family. As to quaternary structure, homomultimer. Ubiquitously expressed at low levels. Localized in vascular tissues, particularly in phloem.

Its subcellular location is the cytoplasm. The enzyme catalyses L-serine + acetyl-CoA = O-acetyl-L-serine + CoA. Its pathway is amino-acid biosynthesis; L-cysteine biosynthesis; L-cysteine from L-serine: step 1/2. The chain is Serine acetyltransferase 2 from Arabidopsis thaliana (Mouse-ear cress).